Reading from the N-terminus, the 193-residue chain is Annexin-2 receptor (193 aa).

Over residues 78–87 (QSTLEPSTAK) the composition is skewed to polar residues. The segment at 78 to 111 (QSTLEPSTAKPTEFSWPGTQKQQEAPVEEVGQAE) is disordered.

Widely expressed. Highly expressed in lymphocytes. Expressed in both resting CD4(+) and CD8(+) T-cells.

Functionally, may act as a receptor for annexin II on marrow stromal cells to induce osteoclast formation. The sequence is that of Annexin-2 receptor (ANXA2R) from Homo sapiens (Human).